The primary structure comprises 231 residues: Nitrate reductase [NAD(P)H] (231 aa).

The FAD-binding FR-type domain maps to 1 to 85 (PQKLGLPVGR…KGPHRHIEYT (85 aa)). Residues 25-28 (RAYT), 42-46 (LIKIY), Phe47, 59-61 (LMS), and Thr112 contribute to the FAD site.

The protein belongs to the nitrate reductase family. Homodimer. FAD serves as cofactor. Requires heme as cofactor. Mo-molybdopterin is required as a cofactor.

It catalyses the reaction nitrite + NAD(+) + H2O = nitrate + NADH + H(+). The catalysed reaction is nitrite + NADP(+) + H2O = nitrate + NADPH + H(+). In terms of biological role, nitrate reductase is a key enzyme involved in the first step of nitrate assimilation in plants, fungi and bacteria. The sequence is that of Nitrate reductase [NAD(P)H] (NAR) from Zea mays (Maize).